A 154-amino-acid chain; its full sequence is NAD(P)H-quinone oxidoreductase subunit N (154 aa).

This sequence belongs to the complex I NdhN subunit family. As to quaternary structure, NDH-1 can be composed of about 15 different subunits; different subcomplexes with different compositions have been identified which probably have different functions.

It localises to the cellular thylakoid membrane. The enzyme catalyses a plastoquinone + NADH + (n+1) H(+)(in) = a plastoquinol + NAD(+) + n H(+)(out). It catalyses the reaction a plastoquinone + NADPH + (n+1) H(+)(in) = a plastoquinol + NADP(+) + n H(+)(out). Functionally, NDH-1 shuttles electrons from an unknown electron donor, via FMN and iron-sulfur (Fe-S) centers, to quinones in the respiratory and/or the photosynthetic chain. The immediate electron acceptor for the enzyme in this species is believed to be plastoquinone. Couples the redox reaction to proton translocation, and thus conserves the redox energy in a proton gradient. Cyanobacterial NDH-1 also plays a role in inorganic carbon-concentration. In Prochlorococcus marinus (strain NATL2A), this protein is NAD(P)H-quinone oxidoreductase subunit N.